The sequence spans 125 residues: Large ribosomal subunit protein bL17 (125 aa).

This sequence belongs to the bacterial ribosomal protein bL17 family. Part of the 50S ribosomal subunit. Contacts protein L32.

In Acinetobacter baylyi (strain ATCC 33305 / BD413 / ADP1), this protein is Large ribosomal subunit protein bL17.